The sequence spans 174 residues: Shikimate kinase 2 (174 aa).

12-17 serves as a coordination point for ATP; the sequence is GCGKTT. The Mg(2+) site is built by Thr-16 and Asp-32. The substrate site is built by Asp-34, Arg-58, and Gly-79. The LID domain stretch occupies residues 112–126; the sequence is EAFPEEGQRPTLTGK. Arg-120 provides a ligand contact to ATP. Arg-139 contacts substrate. Gln-155 lines the ATP pocket.

This sequence belongs to the shikimate kinase family. AroL subfamily. As to quaternary structure, monomer. Mg(2+) is required as a cofactor.

The protein localises to the cytoplasm. The enzyme catalyses shikimate + ATP = 3-phosphoshikimate + ADP + H(+). The protein operates within metabolic intermediate biosynthesis; chorismate biosynthesis; chorismate from D-erythrose 4-phosphate and phosphoenolpyruvate: step 5/7. Its function is as follows. Catalyzes the specific phosphorylation of the 3-hydroxyl group of shikimic acid using ATP as a cosubstrate. The protein is Shikimate kinase 2 of Enterobacter sp. (strain 638).